A 245-amino-acid polypeptide reads, in one-letter code: MALQQIVEPIVTGLGYALVEIERSAGGLLRVTIDLPWPAPNGAAAEPAPDGALALEPAPSGAGTLDTAPDGATALETVPSGATALETAPNGAVSTPAQSVTLEDCEKVTRQLQFALEVDGVQYQRLEVASPGIDRPLRGEQDLLRFAGSVIDITLKAPIGGAAAGKVGATRKKFRGTLERTASGGWQIVWSDAPPPKPGQRVGKKRLPAPLQALGFSLDEVRDMRLAPIVDFKGRTGKAGAAPAG.

It belongs to the RimP family.

Its subcellular location is the cytoplasm. In terms of biological role, required for maturation of 30S ribosomal subunits. In Verminephrobacter eiseniae (strain EF01-2), this protein is Ribosome maturation factor RimP.